Consider the following 443-residue polypeptide: MLRAPRTLAPATAQPTKSLPALNPTELWPSGLSSPQLCPATTATTYYTSLYTQTVPSSVALGTCLDATPHGPEGQIVRCAPAGRLPAKRKLDLEGIGRPTVPEFRTPKGKCIRVDGLPSPKTPKSPGEKTRYDTSLGLLTKKFIYLLSESEDGVLDLNWAAEVLDVQKRRIYDITNVLEGIQLIRKKSKNNIQWVGRELFEDPTRPSRQQQLGQELKELMNAEQTLDQLIQSCSLSFKHLTEDNANKKLAYVTYQDIRAVGNFKEQTVIAVKAPPQTRLEVPDRAEENLQIYLKSTQGPIEVYLCPEEGQEPDSPAKEALPSTSALSPIPDCAQPGCSTDSGIAETIEPSVLIPQPIPPPPPPPLPPAPSLVPLEATDNMLELSHPLLQQTEDQFLSPILAANSPLISFSPPLDQDEYLWGMDEGEGISDLFDSYDLGDLLIN.

Residues 1–22 form a disordered region; the sequence is MLRAPRTLAPATAQPTKSLPAL. The tract at residues 67–107 is cyclin A/CDK2 binding; it reads ATPHGPEGQIVRCAPAGRLPAKRKLDLEGIGRPTVPEFRTP. A DNA-binding region spans residues 109–198; the sequence is GKCIRVDGLP…KNNIQWVGRE (90 aa). Positions 157–178 are leucine-zipper; the sequence is LNWAAEVLDVQKRRIYDITNVL. The DEF box signature appears at 162 to 198; that stretch reads EVLDVQKRRIYDITNVLEGIQLIRKKSKNNIQWVGRE. The dimerization stretch occupies residues 199 to 291; sequence LFEDPTRPSR…PDRAEENLQI (93 aa). Residues 306–341 form a disordered region; sequence PEEGQEPDSPAKEALPSTSALSPIPDCAQPGCSTDS. Residues 361–443 form a transactivation region; it reads PPPPLPPAPS…SYDLGDLLIN (83 aa). Residues 416 to 433 form a retinoblastoma protein binding region; that stretch reads DEYLWGMDEGEGISDLFD.

The protein belongs to the E2F/DP family. As to quaternary structure, component of the DRTF1/E2F transcription factor complex. Forms heterodimers with DP family members. The E2F2 complex binds specifically hypophosphorylated retinoblastoma protein RB1. During the cell cycle, RB1 becomes phosphorylated in mid-to-late G1 phase, detaches from the DRTF1/E2F complex, rendering E2F transcriptionally active. Viral oncoproteins, notably E1A, T-antigen and HPV E7, are capable of sequestering RB protein, thus releasing the active complex. Binds EAPP. Post-translationally, phosphorylated by CDK2 and cyclin A-CDK2 in the S-phase.

It is found in the nucleus. Its function is as follows. Transcription activator that binds DNA cooperatively with DP proteins through the E2 recognition site, 5'-TTTC[CG]CGC-3' found in the promoter region of a number of genes whose products are involved in cell cycle regulation or in DNA replication. The DRTF1/E2F complex functions in the control of cell-cycle progression from g1 to s phase. E2F2 binds specifically to RB1 in a cell-cycle dependent manner. In Mus musculus (Mouse), this protein is Transcription factor E2F2 (E2f2).